The chain runs to 356 residues: Nicotinate-nucleotide--dimethylbenzimidazole phosphoribosyltransferase (356 aa).

Catalysis depends on Glu317, which acts as the Proton acceptor.

This sequence belongs to the CobT family. Homodimer.

It catalyses the reaction 5,6-dimethylbenzimidazole + nicotinate beta-D-ribonucleotide = alpha-ribazole 5'-phosphate + nicotinate + H(+). Its pathway is nucleoside biosynthesis; alpha-ribazole biosynthesis; alpha-ribazole from 5,6-dimethylbenzimidazole: step 1/2. Its function is as follows. Catalyzes the synthesis of alpha-ribazole-5'-phosphate from nicotinate mononucleotide (NAMN) and 5,6-dimethylbenzimidazole (DMB). This chain is Nicotinate-nucleotide--dimethylbenzimidazole phosphoribosyltransferase, found in Salmonella paratyphi A (strain AKU_12601).